The following is a 510-amino-acid chain: Probable RNA-binding protein 46 (510 aa).

Residues Glu-23 to Pro-42 form a disordered region. The span at Gly-31–Pro-42 shows a compositional bias: pro residues. RRM domains are found at residues Arg-45–Asp-123, Cys-125–Pro-207, and Arg-220–Pro-292.

As to expression, expressed in the testis and ovary.

Its subcellular location is the cytoplasm. In terms of biological role, essential for male and female fertility, playing a crucial role in regulating germ cell development by ensuring the proper progression of meiosis prophase I. This chain is Probable RNA-binding protein 46 (rbm46), found in Danio rerio (Zebrafish).